A 324-amino-acid polypeptide reads, in one-letter code: HPr kinase/phosphorylase (324 aa).

Catalysis depends on residues His-146 and Lys-167. 161–168 (GDSGLGKS) provides a ligand contact to ATP. Position 168 (Ser-168) interacts with Mg(2+). Asp-185 (proton acceptor; for phosphorylation activity. Proton donor; for dephosphorylation activity) is an active-site residue. The segment at 209–218 (LEVRGLGLLD) is important for the catalytic mechanism of both phosphorylation and dephosphorylation. Glu-210 contacts Mg(2+). Residue Arg-250 is part of the active site. Positions 271–276 (QVAAGR) are important for the catalytic mechanism of dephosphorylation.

This sequence belongs to the HPrK/P family. In terms of assembly, homohexamer. Requires Mg(2+) as cofactor.

The catalysed reaction is [HPr protein]-L-serine + ATP = [HPr protein]-O-phospho-L-serine + ADP + H(+). It carries out the reaction [HPr protein]-O-phospho-L-serine + phosphate + H(+) = [HPr protein]-L-serine + diphosphate. Catalyzes the ATP- as well as the pyrophosphate-dependent phosphorylation of a specific serine residue in HPr, a phosphocarrier protein of the phosphoenolpyruvate-dependent sugar phosphotransferase system (PTS). HprK/P also catalyzes the pyrophosphate-producing, inorganic phosphate-dependent dephosphorylation (phosphorolysis) of seryl-phosphorylated HPr (P-Ser-HPr). The chain is HPr kinase/phosphorylase from Ralstonia nicotianae (strain ATCC BAA-1114 / GMI1000) (Ralstonia solanacearum).